Reading from the N-terminus, the 171-residue chain is Large ribosomal subunit protein uL10 (171 aa).

It belongs to the universal ribosomal protein uL10 family. As to quaternary structure, part of the ribosomal stalk of the 50S ribosomal subunit. The N-terminus interacts with L11 and the large rRNA to form the base of the stalk. The C-terminus forms an elongated spine to which L12 dimers bind in a sequential fashion forming a multimeric L10(L12)X complex.

Its function is as follows. Forms part of the ribosomal stalk, playing a central role in the interaction of the ribosome with GTP-bound translation factors. In Zymomonas mobilis subsp. mobilis (strain ATCC 31821 / ZM4 / CP4), this protein is Large ribosomal subunit protein uL10.